The primary structure comprises 768 residues: cGMP-dependent protein kinase, isozyme 1 (768 aa).

The tract at residues 1 to 192 (MAAGMLTDRE…NDFLKNIDAS (192 aa)) is regulatory. Residues 114 to 127 (PLASTSSASPSGRT) show a composition bias toward low complexity. The tract at residues 114–134 (PLASTSSASPSGRTSADEVRP) is disordered. 3',5'-cyclic GMP is bound by residues 249–252 (GELA), 259–260 (RT), R366, 375–378 (GEQA), 385–386 (RT), and Y421. In terms of domain architecture, Protein kinase spans 457–717 (LEVVSTLGIG…IQDIKKHKWF (261 aa)). Residues 463-471 (LGIGGFGRV) and K488 contribute to the ATP site. D582 serves as the catalytic Proton acceptor. The AGC-kinase C-terminal domain occupies 718–768 (LGFDWDGLASQLLIPPFVRPIAHPTDVRYFDRFPCDLNEPPDELSGWDADF).

This sequence belongs to the protein kinase superfamily. AGC Ser/Thr protein kinase family. cGMP subfamily. Homodimer. Requires Mg(2+) as cofactor. In terms of processing, autophosphorylated. As to expression, in embryo stage 13, expression is seen in a few large, irregular cells having the appearance of hemocytes or macrophages. In adults, expression is seen in optic lamina and weakly in testis.

The catalysed reaction is L-seryl-[protein] + ATP = O-phospho-L-seryl-[protein] + ADP + H(+). It carries out the reaction L-threonyl-[protein] + ATP = O-phospho-L-threonyl-[protein] + ADP + H(+). Binding of cGMP results in enzyme activation. This Drosophila melanogaster (Fruit fly) protein is cGMP-dependent protein kinase, isozyme 1 (Pkg21D).